A 199-amino-acid chain; its full sequence is Thymidylate kinase (199 aa).

7-14 (GTEGVGKT) is a binding site for ATP.

Belongs to the thymidylate kinase family.

It carries out the reaction dTMP + ATP = dTDP + ADP. Its function is as follows. Phosphorylation of dTMP to form dTDP in both de novo and salvage pathways of dTTP synthesis. This Acinetobacter baumannii (strain ACICU) protein is Thymidylate kinase.